The following is a 273-amino-acid chain: Nicotinamide N-methyltransferase (273 aa).

S-adenosyl-L-methionine contacts are provided by residues tyrosine 35, tyrosine 40, glycine 74 to alanine 75, tyrosine 80, aspartate 96, asparagine 101, and asparagine 152 to valine 153.

The protein belongs to the class I-like SAM-binding methyltransferase superfamily. NNMT/PNMT/TEMT family.

The catalysed reaction is nicotinamide + S-adenosyl-L-methionine = 1-methylnicotinamide + S-adenosyl-L-homocysteine. Its function is as follows. Catalyzes the N-methylation of nicotinamide and other pyridines to form pyridinium ions. Involved in regulation of lifespan extension downstream of the sirtuin sir-2.1, probably through its role in nicotinic acid metabolism. In Caenorhabditis elegans, this protein is Nicotinamide N-methyltransferase.